The sequence spans 611 residues: MPKLRSATSTQGRNMAGARALWRATGMKENDFGKPIIAVVNSFTQFVPGHVHLKDMGQLVAREIEKAGGVAKEFNTIAVDDGIAMGHGGMLYSLPSRDLIADSVEYMVNAHCADAMVCISNCDKITPGMLMAALRLNIPCVFVSGGPMEAGKTKLSDKIIKLDLVDAMIQGANPNVSDEDSAQIERSACPTCGSCSGMFTANSMNCLTEALGLSLPGNGSCLATHADRKQLFLDAGKQVVELCKRYYEQEDDSVLPRSIANKKAFENAMSLDIAMGGSTNTVLHLLAAAQEAEVDFTMADIDRLSRQVPCLSKVAPNTQKYHMEDVHRAGGIMAILGELDRANLLHNDTRTVLGMSLAEQIAKYDIVLTKDEAVHKFFRAGPAGIRTTEAFSQDCRWDTVDDDRENGCIRSKTFAYSQDGGLAMLSGNLAMDGCIVKTAGVDESILKFTGDAIVFESQEDAVAGILGGKVQAGHVVVIRYEGPKGGPGMQEMLYPTSYLKSMGLGKACALLTDGRFSGGTSGLSIGHCSPEAAAGGLIGLVKDGDKIEIDIPNRSIQLCVAEEELAQRRAEQDKLGWQPVNRQREVSFALKVYGHFATSADKGAVRDKTKI.

Residue aspartate 81 participates in Mg(2+) binding. Cysteine 122 contacts [2Fe-2S] cluster. Residues aspartate 123 and lysine 124 each contribute to the Mg(2+) site. Lysine 124 is modified (N6-carboxylysine). Cysteine 195 contacts [2Fe-2S] cluster. Glutamate 491 contributes to the Mg(2+) binding site. The Proton acceptor role is filled by serine 517.

Belongs to the IlvD/Edd family. In terms of assembly, homodimer. The cofactor is [2Fe-2S] cluster. Mg(2+) serves as cofactor.

The catalysed reaction is (2R)-2,3-dihydroxy-3-methylbutanoate = 3-methyl-2-oxobutanoate + H2O. It catalyses the reaction (2R,3R)-2,3-dihydroxy-3-methylpentanoate = (S)-3-methyl-2-oxopentanoate + H2O. The protein operates within amino-acid biosynthesis; L-isoleucine biosynthesis; L-isoleucine from 2-oxobutanoate: step 3/4. It participates in amino-acid biosynthesis; L-valine biosynthesis; L-valine from pyruvate: step 3/4. Functionally, functions in the biosynthesis of branched-chain amino acids. Catalyzes the dehydration of (2R,3R)-2,3-dihydroxy-3-methylpentanoate (2,3-dihydroxy-3-methylvalerate) into 2-oxo-3-methylpentanoate (2-oxo-3-methylvalerate) and of (2R)-2,3-dihydroxy-3-methylbutanoate (2,3-dihydroxyisovalerate) into 2-oxo-3-methylbutanoate (2-oxoisovalerate), the penultimate precursor to L-isoleucine and L-valine, respectively. The chain is Dihydroxy-acid dehydratase from Pasteurella multocida (strain Pm70).